Here is a 214-residue protein sequence, read N- to C-terminus: MRIILLGAPGAGKGTQAQFIMEQYGIPQISTGDMLRAAVKAGTPLGLEAKKVMDAGQLVSDDLIIGLVKERIAQEDCVKGFLLDGFPRTIPQADAMAENGIEIDHVIEIDVPDEEIVKRMSGRRVHSGSGRVYHVVFNPPKVEGKDDVTGEDLSIRPDDEESTVRKRLGIYHEQTKPLVDYYGKVAAEGRTQYNKFDGTQSVTKVSEQLASVLK.

ATP is bound at residue 10-15 (GAGKGT). An NMP region spans residues 30–59 (STGDMLRAAVKAGTPLGLEAKKVMDAGQLV). AMP contacts are provided by residues Thr31, Arg36, 57–59 (QLV), 85–88 (GFPR), and Gln92. Positions 122–159 (GRRVHSGSGRVYHVVFNPPKVEGKDDVTGEDLSIRPDD) are LID. Residues Arg123 and 132 to 133 (VY) each bind ATP. AMP-binding residues include Arg156 and Arg167. Position 200 (Gln200) interacts with ATP.

Belongs to the adenylate kinase family. As to quaternary structure, monomer.

Its subcellular location is the cytoplasm. It carries out the reaction AMP + ATP = 2 ADP. It participates in purine metabolism; AMP biosynthesis via salvage pathway; AMP from ADP: step 1/1. Functionally, catalyzes the reversible transfer of the terminal phosphate group between ATP and AMP. Plays an important role in cellular energy homeostasis and in adenine nucleotide metabolism. The protein is Adenylate kinase of Shewanella frigidimarina (strain NCIMB 400).